Here is a 51-residue protein sequence, read N- to C-terminus: uncharacterized protein (51 aa).

This is an uncharacterized protein from Dictyostelium discoideum (Social amoeba).